Reading from the N-terminus, the 124-residue chain is Large ribosomal subunit protein bL12 (124 aa).

The protein belongs to the bacterial ribosomal protein bL12 family. Homodimer. Part of the ribosomal stalk of the 50S ribosomal subunit. Forms a multimeric L10(L12)X complex, where L10 forms an elongated spine to which 2 to 4 L12 dimers bind in a sequential fashion. Binds GTP-bound translation factors.

Functionally, forms part of the ribosomal stalk which helps the ribosome interact with GTP-bound translation factors. Is thus essential for accurate translation. This is Large ribosomal subunit protein bL12 from Jannaschia sp. (strain CCS1).